A 431-amino-acid chain; its full sequence is MFHSPRRLCSALLQRDAPGLRRLPAPGLRRPLSPPAAVPRPASPRLLAAASAASGAARSCSRTVCSMGTGTSRLYSALAKTLNSSAASQHPEYLVSPDPEHLEPIDPKELLEECRAVLHTRPPRFQRDFVDLRTDCPSTHPPIRVMQWNILAQALGEGKDNFVQCPVEALKWEERKCLILEEILAYQPDILCLQEVDHYFDTFQPLLSRLGYQGTFFPKPWSPCLDVEHNNGPDGCALFFLQNRFKLVNSANIRLTAMTLKTNQVAIAQTLECKESGRQFCIAVTHLKARTGWERFRSAQGCDLLQNLQNITQGAKIPLIVCGDFNAEPTEEVYKHFASSSLNLNSAYKLLSADGQSEPPYTTWKIRTSGECRHTLDYIWYSKHALNVRSALDLLTEEQIGPNRLPSFNYPSDHLSLVCDFSFTEESDGLS.

The transit peptide at 1–75 directs the protein to the mitochondrion; sequence MFHSPRRLCS…SMGTGTSRLY (75 aa). A compositionally biased stretch (low complexity) spans 20 to 31; that stretch reads LRRLPAPGLRRP. Residues 20–41 are disordered; that stretch reads LRRLPAPGLRRPLSPPAAVPRP. Residues 32–41 show a composition bias toward pro residues; sequence LSPPAAVPRP. Glu-195 is a Mg(2+) binding site. Substrate is bound by residues Glu-195, 219-221, Asn-263, 286-289, and 324-326; these read KPW, HLKA, and DFN. The segment at 343–353 is interaction with PPARG; sequence NLNSAYKLLSA. His-414 lines the substrate pocket.

The protein belongs to the CCR4/nocturin family. Interacts with PPARG. Mg(2+) serves as cofactor. Adipose tissue. Expression is higher in subcutaneous adipose tissue as compared to visceral adipose tissue.

The protein localises to the cytoplasm. It localises to the nucleus. The protein resides in the perinuclear region. It is found in the mitochondrion. The enzyme catalyses NADP(+) + H2O = phosphate + NAD(+). It catalyses the reaction NADPH + H2O = phosphate + NADH. Phosphatase which catalyzes the conversion of NADP(+) to NAD(+) and of NADPH to NADH. Shows a small preference for NADPH over NADP(+). Represses translation and promotes degradation of target mRNA molecules. Plays an important role in post-transcriptional regulation of metabolic genes under circadian control. Exerts a rhythmic post-transcriptional control of genes necessary for metabolic functions including nutrient absorption, glucose/insulin sensitivity, lipid metabolism, adipogenesis, inflammation and osteogenesis. Plays an important role in favoring adipogenesis over osteoblastogenesis and acts as a key regulator of the adipogenesis/osteogenesis balance. Promotes adipogenesis by facilitating PPARG nuclear translocation which activates its transcriptional activity. Regulates circadian expression of NOS2 in the liver and negatively regulates the circadian expression of IGF1 in the bone. Critical for proper development of early embryos. This Homo sapiens (Human) protein is Nocturnin.